We begin with the raw amino-acid sequence, 230 residues long: E3 ubiquitin-protein ligase RNF114 (230 aa).

Residues 31-70 form an RING-type zinc finger; that stretch reads CPVCLEVYEKPVQVPCGHVFCSACLQECLKPKKPVCGVCR. Residues Cys93 and Cys96 each coordinate Zn(2+). The segment at 93 to 112 adopts a C2HC RNF-type zinc-finger fold; that stretch reads CHGCRKNFFLSKIRAHVATC. Position 104 is an N6-acetyllysine (Lys104). Zn(2+) is bound by residues His108 and Cys112. Lys114 carries the N6-acetyllysine modification.

Interacts with XAF1, the interaction increases XAF1 stability and proapoptotic effects, and may regulate IFN signaling. Autoubiquitinated. Polyubiquitinated in the presence of E2 enzymes UBE2D1, UBE2D2 and UBE2D3, but only monoubiquitinated in the presence of UBE2E1.

It localises to the cytoplasm. The protein resides in the nucleus. The enzyme catalyses S-ubiquitinyl-[E2 ubiquitin-conjugating enzyme]-L-cysteine + [acceptor protein]-L-lysine = [E2 ubiquitin-conjugating enzyme]-L-cysteine + N(6)-ubiquitinyl-[acceptor protein]-L-lysine.. It functions in the pathway protein modification; protein ubiquitination. Functionally, E3 ubiquitin-protein ligase that promotes the ubiquitination of various substrates. In turn, participates in the regulation of many biological processes including cell cycle, apoptosis, osteoclastogenesis as well as innate or adaptive immunity. Acts as negative regulator of NF-kappa-B-dependent transcription by promoting the ubiquitination and stabilization of the NF-kappa-B inhibitor TNFAIP3. May promote the ubiquitination of TRAF6 as well. Also acts as a negative regulator of T-cell activation. Inhibits cellular dsRNA responses and interferon production by targeting MAVS component for proteasomal degradation. Ubiquitinates the CDK inhibitor CDKN1A leading to its degradationand probably also CDKN1B and CDKN1C. This activity stimulates cell cycle G1-to-S phase transition and suppresses cellular senescence. May play a role in spermatogenesis. The protein is E3 ubiquitin-protein ligase RNF114 (RNF114) of Bos taurus (Bovine).